Reading from the N-terminus, the 375-residue chain is Chaperone protein DnaJ (375 aa).

The 65-residue stretch at 4 to 68 folds into the J domain; sequence DYYETLGVDR…ETRARYDQFG (65 aa). A CR-type zinc finger spans residues 134 to 216; that stretch reads GGEKEIRIPH…CGGAGRKQET (83 aa). Zn(2+) contacts are provided by C147, C150, C164, C167, C190, C193, C204, and C207. 4 CXXCXGXG motif repeats span residues 147-154, 164-171, 190-197, and 204-211; these read CQVCNGSG, CSTCNGAG, CPDCNGAG, and CDACGGAG.

The protein belongs to the DnaJ family. Homodimer. Zn(2+) is required as a cofactor.

The protein resides in the cytoplasm. In terms of biological role, participates actively in the response to hyperosmotic and heat shock by preventing the aggregation of stress-denatured proteins and by disaggregating proteins, also in an autonomous, DnaK-independent fashion. Unfolded proteins bind initially to DnaJ; upon interaction with the DnaJ-bound protein, DnaK hydrolyzes its bound ATP, resulting in the formation of a stable complex. GrpE releases ADP from DnaK; ATP binding to DnaK triggers the release of the substrate protein, thus completing the reaction cycle. Several rounds of ATP-dependent interactions between DnaJ, DnaK and GrpE are required for fully efficient folding. Also involved, together with DnaK and GrpE, in the DNA replication of plasmids through activation of initiation proteins. The sequence is that of Chaperone protein DnaJ from Rippkaea orientalis (strain PCC 8801 / RF-1) (Cyanothece sp. (strain PCC 8801)).